A 157-amino-acid chain; its full sequence is Ribosome maturation factor RimP (157 aa).

This sequence belongs to the RimP family.

The protein resides in the cytoplasm. In terms of biological role, required for maturation of 30S ribosomal subunits. The polypeptide is Ribosome maturation factor RimP (Synechococcus sp. (strain CC9311)).